A 162-amino-acid chain; its full sequence is NADH-quinone oxidoreductase subunit I (162 aa).

2 consecutive 4Fe-4S ferredoxin-type domains span residues Leu52–Gly82 and Thr93–Asn122. [4Fe-4S] cluster-binding residues include Cys62, Cys65, Cys68, Cys72, Cys102, Cys105, Cys108, and Cys112.

It belongs to the complex I 23 kDa subunit family. NDH-1 is composed of 14 different subunits. Subunits NuoA, H, J, K, L, M, N constitute the membrane sector of the complex. [4Fe-4S] cluster serves as cofactor.

It is found in the cell inner membrane. It carries out the reaction a quinone + NADH + 5 H(+)(in) = a quinol + NAD(+) + 4 H(+)(out). Functionally, NDH-1 shuttles electrons from NADH, via FMN and iron-sulfur (Fe-S) centers, to quinones in the respiratory chain. The immediate electron acceptor for the enzyme in this species is believed to be ubiquinone. Couples the redox reaction to proton translocation (for every two electrons transferred, four hydrogen ions are translocated across the cytoplasmic membrane), and thus conserves the redox energy in a proton gradient. The protein is NADH-quinone oxidoreductase subunit I of Methylorubrum extorquens (strain PA1) (Methylobacterium extorquens).